Here is a 377-residue protein sequence, read N- to C-terminus: tRNA-specific 2-thiouridylase MnmA (377 aa).

ATP contacts are provided by residues Ala18–Ser25 and Met44. Residue Cys113 is the Nucleophile of the active site. A disulfide bridge connects residues Cys113 and Cys210. Gly137 lines the ATP pocket. The segment at Arg159 to Gln161 is interaction with tRNA. The Cysteine persulfide intermediate role is filled by Cys210.

Belongs to the MnmA/TRMU family.

It localises to the cytoplasm. The catalysed reaction is S-sulfanyl-L-cysteinyl-[protein] + uridine(34) in tRNA + AH2 + ATP = 2-thiouridine(34) in tRNA + L-cysteinyl-[protein] + A + AMP + diphosphate + H(+). Functionally, catalyzes the 2-thiolation of uridine at the wobble position (U34) of tRNA, leading to the formation of s(2)U34. This Rhodospirillum rubrum (strain ATCC 11170 / ATH 1.1.1 / DSM 467 / LMG 4362 / NCIMB 8255 / S1) protein is tRNA-specific 2-thiouridylase MnmA.